The following is a 28-amino-acid chain: Aryl acylamidase (28 aa).

Homodimer.

The enzyme catalyses an anilide + H2O = aniline + a carboxylate + H(+). The sequence is that of Aryl acylamidase from Nocardia globerula.